The chain runs to 455 residues: Phosphoglucosamine mutase (455 aa).

Serine 108 functions as the Phosphoserine intermediate in the catalytic mechanism. Residues serine 108, aspartate 248, aspartate 250, and aspartate 252 each contribute to the Mg(2+) site. Serine 108 bears the Phosphoserine mark.

The protein belongs to the phosphohexose mutase family. It depends on Mg(2+) as a cofactor. Post-translationally, activated by phosphorylation.

It catalyses the reaction alpha-D-glucosamine 1-phosphate = D-glucosamine 6-phosphate. Its function is as follows. Catalyzes the conversion of glucosamine-6-phosphate to glucosamine-1-phosphate. The sequence is that of Phosphoglucosamine mutase from Leuconostoc mesenteroides subsp. mesenteroides (strain ATCC 8293 / DSM 20343 / BCRC 11652 / CCM 1803 / JCM 6124 / NCDO 523 / NBRC 100496 / NCIMB 8023 / NCTC 12954 / NRRL B-1118 / 37Y).